Here is a 211-residue protein sequence, read N- to C-terminus: Small ribosomal subunit protein eS8 (211 aa).

The protein belongs to the eukaryotic ribosomal protein eS8 family.

The protein is Small ribosomal subunit protein eS8 (rps8) of Dictyostelium discoideum (Social amoeba).